Consider the following 159-residue polypeptide: Protein hunchback (159 aa).

Residues 18-34 are compositionally biased toward basic residues; that stretch reads HNHHHHHHHGHHQHQQR. Disordered regions lie at residues 18–49 and 119–159; these read HNHH…QSPL and LTPP…KYMA. Residues 140 to 159 are compositionally biased toward basic and acidic residues; the sequence is EPEKEHDLMSNSSEDMKYMA.

It belongs to the hunchback C2H2-type zinc-finger protein family.

Its subcellular location is the nucleus. In terms of biological role, gap class segmentation protein that controls development of head structures. The polypeptide is Protein hunchback (hb) (Drosophila soonae (Fruit fly)).